We begin with the raw amino-acid sequence, 541 residues long: AT-rich interactive domain-containing protein 3A (541 aa).

The segment at 17 to 172 (RLQQELEARQ…KHPNPQAFPT (156 aa)) is disordered. Residues 55-73 (LKIQRAQAAALAAMRAAAA) are compositionally biased toward low complexity. The span at 84-102 (SDEEEEDGESMASDEEDEK) shows a compositional bias: acidic residues. Positions 103–112 (ERDGESERYP) are enriched in basic and acidic residues. The span at 115–144 (GSEEEDLKGKWDEDDFEDEGEEDDYEDMEE) shows a compositional bias: acidic residues. An ARID domain is found at 212-304 (DPKRKEFLDD…YLYPYECEKR (93 aa)). Residues 407–501 (AALEQLREKL…GVLFAQPPTS (95 aa)) enclose the REKLES domain. The tract at residues 408 to 450 (ALEQLREKLESGEPPEKKMALGTEEQQRLQRAIQHNLLAMTAQ) is important for nuclear localization. A homodimerization region spans residues 452–473 (PMNIRINSQAEGRQDSAVNLTT). The important for cytoplasmic localization stretch occupies residues 497–504 (QPPTSASG). The tract at residues 499–541 (PTSASGTSKGSSNRTGSIGGGSSTSQAAPPPAPSAPTSNNPSP) is disordered.

As to quaternary structure, homodimer.

The protein localises to the nucleus. The protein resides in the cytoplasm. Functionally, transcription factor required for smad1 and smad2-mediated responses to TGFbeta during mesoderm induction. This Xenopus tropicalis (Western clawed frog) protein is AT-rich interactive domain-containing protein 3A (arid3a).